Consider the following 297-residue polypeptide: Urease accessory protein UreD (297 aa).

It belongs to the UreD family. In terms of assembly, ureD, UreF and UreG form a complex that acts as a GTP-hydrolysis-dependent molecular chaperone, activating the urease apoprotein by helping to assemble the nickel containing metallocenter of UreC. The UreE protein probably delivers the nickel.

It is found in the cytoplasm. In terms of biological role, required for maturation of urease via the functional incorporation of the urease nickel metallocenter. The protein is Urease accessory protein UreD of Prochlorococcus marinus subsp. pastoris (strain CCMP1986 / NIES-2087 / MED4).